Reading from the N-terminus, the 237-residue chain is Ribonuclease PH (237 aa).

Residues Arg86 and 124–126 each bind phosphate; that span reads GTR.

It belongs to the RNase PH family. As to quaternary structure, homohexameric ring arranged as a trimer of dimers.

The catalysed reaction is tRNA(n+1) + phosphate = tRNA(n) + a ribonucleoside 5'-diphosphate. In terms of biological role, phosphorolytic 3'-5' exoribonuclease that plays an important role in tRNA 3'-end maturation. Removes nucleotide residues following the 3'-CCA terminus of tRNAs; can also add nucleotides to the ends of RNA molecules by using nucleoside diphosphates as substrates, but this may not be physiologically important. Probably plays a role in initiation of 16S rRNA degradation (leading to ribosome degradation) during starvation. This Shewanella frigidimarina (strain NCIMB 400) protein is Ribonuclease PH.